We begin with the raw amino-acid sequence, 405 residues long: Cysteine desulfurase IscS (405 aa).

Residues 75–76 (AT), N156, Q184, and 204–206 (SAH) each bind pyridoxal 5'-phosphate. N6-(pyridoxal phosphate)lysine is present on K207. T244 is a binding site for pyridoxal 5'-phosphate. The Cysteine persulfide intermediate role is filled by C329. A [2Fe-2S] cluster-binding site is contributed by C329.

It belongs to the class-V pyridoxal-phosphate-dependent aminotransferase family. NifS/IscS subfamily. In terms of assembly, homodimer. Forms a heterotetramer with IscU, interacts with other sulfur acceptors. It depends on pyridoxal 5'-phosphate as a cofactor.

Its subcellular location is the cytoplasm. The enzyme catalyses (sulfur carrier)-H + L-cysteine = (sulfur carrier)-SH + L-alanine. It functions in the pathway cofactor biosynthesis; iron-sulfur cluster biosynthesis. In terms of biological role, master enzyme that delivers sulfur to a number of partners involved in Fe-S cluster assembly, tRNA modification or cofactor biosynthesis. Catalyzes the removal of elemental sulfur atoms from cysteine to produce alanine. Functions as a sulfur delivery protein for Fe-S cluster synthesis onto IscU, an Fe-S scaffold assembly protein, as well as other S acceptor proteins. In Acinetobacter baumannii (strain AB307-0294), this protein is Cysteine desulfurase IscS.